Reading from the N-terminus, the 101-residue chain is Small ribosomal subunit protein uS14 (101 aa).

It belongs to the universal ribosomal protein uS14 family. In terms of assembly, part of the 30S ribosomal subunit. Contacts proteins S3 and S10.

Its function is as follows. Binds 16S rRNA, required for the assembly of 30S particles and may also be responsible for determining the conformation of the 16S rRNA at the A site. In Methylorubrum extorquens (strain PA1) (Methylobacterium extorquens), this protein is Small ribosomal subunit protein uS14.